A 769-amino-acid polypeptide reads, in one-letter code: Phosphatidylinositol 4-phosphate 5-kinase 8 (769 aa).

8 MORN repeats span residues 16–38 (YSGQ…DGII), 39–61 (YEGD…SGAK), 62–84 (YEGD…DGSV), 85–107 (YAGA…NSDV), 108–130 (YDGS…NGNR), 131–153 (FIGN…NGDL), 154–176 (FNGF…DGGF), and 177–198 (YFGT…AGSK). The segment at 266 to 289 (PPRDFMHHGPSSKSARSVDSGQSE) is disordered. The segment covering 276–288 (SSKSARSVDSGQS) has biased composition (polar residues). In terms of domain architecture, PIPK spans 344 to 765 (WNHYLMLNLQ…RFIDFLLKVF (422 aa)). The activation loop stretch occupies residues 725-746 (YNMKKKVEHTCKSMKYDPMTIS).

It catalyses the reaction a 1,2-diacyl-sn-glycero-3-phospho-(1D-myo-inositol 4-phosphate) + ATP = a 1,2-diacyl-sn-glycero-3-phospho-(1D-myo-inositol-4,5-bisphosphate) + ADP + H(+). This Arabidopsis thaliana (Mouse-ear cress) protein is Phosphatidylinositol 4-phosphate 5-kinase 8 (PIP5K8).